A 214-amino-acid chain; its full sequence is Probable GTP-binding protein EngB (214 aa).

The EngB-type G domain occupies 22-194; sequence NLPEIAFAGR…WARIDALLSP (173 aa). GTP contacts are provided by residues 30–37, 57–61, 75–78, 142–145, and 173–175; these read GRSNVGKS, GRTQL, DLPG, TKCD, and FSA. Positions 37 and 59 each coordinate Mg(2+).

The protein belongs to the TRAFAC class TrmE-Era-EngA-EngB-Septin-like GTPase superfamily. EngB GTPase family. Requires Mg(2+) as cofactor.

Its function is as follows. Necessary for normal cell division and for the maintenance of normal septation. In Citrifermentans bemidjiense (strain ATCC BAA-1014 / DSM 16622 / JCM 12645 / Bem) (Geobacter bemidjiensis), this protein is Probable GTP-binding protein EngB.